The following is a 791-amino-acid chain: Metabotropic glutamate receptor-like protein D (791 aa).

The first 22 residues, 1–22 (MKINSFLIILILLFISIKNSNG), serve as a signal peptide directing secretion. Residues 23–390 (EPEKKFKLIT…TEVYQSRPIQ (368 aa)) are Extracellular-facing. N72, N168, N279, N290, N306, and N349 each carry an N-linked (GlcNAc...) asparagine glycan. A helical transmembrane segment spans residues 391-411 (IAISSISSFFIVTVLVMMGLV). Residues 412-424 (VRFRKNPSIRSAS) lie on the Cytoplasmic side of the membrane. Residues 425–445 (PIFLNFILFGALIIYVGIIIW) form a helical membrane-spanning segment. The Extracellular segment spans residues 446–453 (SSSINSAS). A helical membrane pass occupies residues 454-474 (CNAQFWLVTLGFTTLIGSLVV). At 475-495 (KNVRIWLIFDNPELKLVKITN) the chain is on the cytoplasmic side. The helical transmembrane segment at 496–516 (LQLVPWVGVCLVINIILMSIL) threads the bilayer. Residues 517–550 (TSVGDLREVNAQGIDSLGKYEFMRICKMNSSGAS) lie on the Extracellular side of the membrane. N-linked (GlcNAc...) asparagine glycosylation occurs at N545. A helical transmembrane segment spans residues 551–571 (TLYTILAYFAALLLIGVFVSW). Residues 572 to 585 (KIRIVDILEFNESK) are Cytoplasmic-facing. The chain crosses the membrane as a helical span at residues 586–606 (AIANTLYAISFCLFVIVPLMI). Residues 607-615 (SPQDKQSEK) lie on the Extracellular side of the membrane. Residues 616–636 (IILCIAGLFIVTAAVLIIFVP) form a helical membrane-spanning segment. The Cytoplasmic portion of the chain corresponds to 637–791 (KFYRVYIFGS…KNEENNDGDN (155 aa)). 2 disordered regions span residues 664–715 (TARA…SEPN) and 746–791 (IITE…DGDN). Residues 674–689 (SSGGGAGSGGATGGSG) are compositionally biased toward gly residues. Residues 749–760 (ENGQDSNNNNNN) show a composition bias toward low complexity. Positions 752 to 781 (QDSNNNNNNEENKDNNIENNKISEEIKENL) form a coiled coil. Over residues 761–785 (EENKDNNIENNKISEEIKENLKNEE) the composition is skewed to basic and acidic residues.

It in the N-terminal section; belongs to the BMP lipoprotein family. The protein in the C-terminal section; belongs to the G-protein coupled receptor 3 family. GABA-B receptor subfamily.

Its subcellular location is the membrane. This Dictyostelium discoideum (Social amoeba) protein is Metabotropic glutamate receptor-like protein D (grlD).